The sequence spans 696 residues: C2 domain-containing protein 2 (696 aa).

A helical transmembrane segment spans residues 8–28 (VQWLFLVSLFVAALGTVGLYL). The 194-residue stretch at 45-238 (EPDELRRRES…PTQVKEAQSL (194 aa)) folds into the SMP-LBD domain. Ser54 carries the post-translational modification Phosphoserine. One can recognise a C2 domain in the interval 241–357 (PSSTAQEPCP…RKQPNGPQTF (117 aa)). Ser436 carries the post-translational modification Phosphoserine. Thr440 is subject to Phosphothreonine. Residues 551–611 (ATEASATTPP…DGDELSESSL (61 aa)) are disordered. Residues 573-588 (KPRENDLDSWELEKES) are compositionally biased toward basic and acidic residues. At Ser581 the chain carries Phosphoserine.

It localises to the membrane. This Mus musculus (Mouse) protein is C2 domain-containing protein 2.